Consider the following 501-residue polypeptide: Phytoene desaturase (lycopene-forming) (501 aa).

FAD is bound at residue 12–45 (IVIGAGFGGLALAIRLQSAGIATTLVEARDKPGG).

The protein belongs to the carotenoid/retinoid oxidoreductase family. It depends on FAD as a cofactor.

The catalysed reaction is 15-cis-phytoene + 4 A = all-trans-lycopene + 4 AH2. It participates in carotenoid biosynthesis; astaxanthin biosynthesis. Its function is as follows. This enzyme converts phytoene into lycopene via the intermediaries of phytofluene, zeta-carotene and neurosporene by the introduction of four double bonds. The chain is Phytoene desaturase (lycopene-forming) (crtI) from Paracoccus sp. (strain N81106 / MBIC 01143) (Agrobacterium aurantiacum).